The sequence spans 196 residues: Ribonuclease HII (196 aa).

An RNase H type-2 domain is found at 1 to 196 (MVTIGVDEAG…FAPVAQLQLL (196 aa)). The a divalent metal cation site is built by Asp7, Glu8, and Asp103.

This sequence belongs to the RNase HII family. Mn(2+) is required as a cofactor. The cofactor is Mg(2+).

The protein resides in the cytoplasm. The enzyme catalyses Endonucleolytic cleavage to 5'-phosphomonoester.. Functionally, endonuclease that specifically degrades the RNA of RNA-DNA hybrids. This is Ribonuclease HII from Novosphingobium aromaticivorans (strain ATCC 700278 / DSM 12444 / CCUG 56034 / CIP 105152 / NBRC 16084 / F199).